The following is a 694-amino-acid chain: Putative serine/threonine-protein kinase R679 (694 aa).

Positions 167-548 (ITKNKTVGKG…ITNILKHLFT (382 aa)) constitute a Protein kinase domain. Residues 173-181 (VGKGAAGIA) and lysine 196 contribute to the ATP site. Residue aspartate 395 is the Proton acceptor of the active site.

Belongs to the protein kinase superfamily. Ser/Thr protein kinase family.

Its subcellular location is the virion. It catalyses the reaction L-seryl-[protein] + ATP = O-phospho-L-seryl-[protein] + ADP + H(+). The enzyme catalyses L-threonyl-[protein] + ATP = O-phospho-L-threonyl-[protein] + ADP + H(+). The protein is Putative serine/threonine-protein kinase R679 of Acanthamoeba polyphaga (Amoeba).